The following is a 2059-amino-acid chain: MAFSQSFNFGNSTLMALEKGMQADDKENAQPGNGNIQVQSAGNEVNSEIQEINSEFFRDEFSYEVNQAHKPAEQSVVNVSQVQQHMAVVSNQDSEDQSRSSALNDQICTQSSFEGEDAGADAVLDQPNLDENSFLCPAQDEEASEQLKEDILHSHSVLAKQEFYQEISQVTQNLSSMSPNQLRVSPNSSRIREAMPERPAMPLDLNTLRSISAWNLPMSIQAEYKKKGVVDMFDWQVECLSKPRLLFEHCNLVYSAPTSAGKTLVSEILMLKTVLERGKKVLLILPFISVVREKMFYMQDLLTPAGYRVEGFYGGYTPPGGFESLHVAICTIEKANSIVNKLMEQGKLETIGMVVVDEVHLISDKGRGYILELLLAKILYMSRRNGLQIQVITMSATLENVQLLQSWLDAELYITNYRPVALKEMIKVGTVIYDHRLKLVRDVAKQKVLLKGLENDSDDVALLCIETLLEGCSVIVFCPSKDWCENLAVQLATAIHVQIKSETVLGQRLRTNLNPRAIAEVKQQLRDIPTGLDGVMSKAITYACAFHHAGLTTEERDIIEASFKAGALKVLVATSTLSSGVNLPARRVLIRSPLFGGKQMSSLTYRQMIGRAGRMGKDTLGESILICNEINARMGRDLVVSELQPITSCLDMDGSTHLKRALLEVISSGVANTKEDIDFFVNCTLLSAQKAFHAKEKPPDEESDANYINDALDFLVEYEFVRLQRNEERETAVYVATRLGAACLASSMPPTDGLILFAELQKSRRSFVLESELHAVYLVTPYSVCYQLQDIDWLLYVHMWEKLSSPMKKVGELVGVRDAFLYKALRGQTKLDYKQMQIHKRFYIALALEELVNETPINVVVHKYKCHRGMLQSLQQMASTFAGIVTAFCNSLQWSTLALIVSQFKDRLFFGIHRDLIDLMRIPDLSQKRARALFDAGITSLVELAGADPVELEKVLYNSISFDSAKQHDHENADEAAKRNVVRNFYITGKAGMTVSEAAKLLIGEARQFVQHEIGLGTIKWTQTQAGVEIASRAIHDGGEVDLHMSLEEEQPPVKRKLSIEENGTANSQKNPRLETVVDTQRGYKVDKNIANQSKMNPNLKEIDAQNKARRNSTAHMDNLNPISNDPCQNNVNVKTAQPIISNLNDIQKQGSQIEKMKINPATVVCSPQLANEEKPSTSQSARRKLVNEGMAERRRVALMKIQQRTQKENQSKDQPIQASRSNQLSSPVNRTPANRWTQSENPNNEMNNSQLPRRNPRNQSPVPNANRTASRKVSNAEEDLFMADDSFMLNTGLAAALTAAESKIASCTEADVIPSSQPKEPEVIGALTPHASRLKRSDQLRSQRIQSPSPTPQREIEIDLESKNESNGVSSMEISDMSMENPLMKNPLHLNASHIMSCSKVDETASSFSSIDIIDVCGHRNAFQAAIIEINNATRLGFSVGLQAQAGKQKPLIGSNLLINQVAAAENREAAARERVLFQVDDTNFISGVSFCLADNVAYYWNMQIDERAAYQGVPTPLKVQELCNLMARKDLTLVMHDGKEQLKMLRKAIPQLKRISAKLEDAKVANWLLQPDKTVNFLNMCQTFAPECTGLANLCGSGRGYSSYGLDTSSAILPRIRTAIESCVTLHILQGQTENLSRIGNGDLLKFFHDIEMPIQLTLCQMELVGFPAQKQRLQQLYQRMVAVMKKVETKIYEQHGSRFNLGSSQAVAKVLGLHRKAKGRVTTSRQVLEKLNSPISHLILGYRKLSGLLAKSIQPLMECCQADRIHGQSITYTATGRISMTEPNLQNVAKEFSIQVGSDVVHISCRSPFMPTDESRCLLSADFCQLEMRILAHMSQDKALLEVMKSSQDLFIAIAAHWNKIEESEVTQDLRNSTKQVCYGIVYGMGMRSLAESLNCSEQEARMISDQFHQAYKGIRDYTTRVVNFARSKGFVETITGRRRYLENINSDVEHLKNQAERQAVNSTIQGSAADIAKNAILKMEKNIERYREKLALGDNSVDLVMHLHDELIFEVPTGKAKKIAKVLSLTMENCVKLSVPLKVKLRIGRSWGEFKEVSV.

Residues 25-45 are disordered; sequence DKENAQPGNGNIQVQSAGNEV. A compositionally biased stretch (polar residues) spans 30-45; the sequence is QPGNGNIQVQSAGNEV. Positions 243 to 416 constitute a Helicase ATP-binding domain; it reads PRLLFEHCNL…WLDAELYITN (174 aa). 256–263 lines the ATP pocket; that stretch reads APTSAGKT. The short motif at 357–360 is the DEAH box element; it reads DEVH. Residues 464–666 enclose the Helicase C-terminal domain; sequence CIETLLEGCS…HLKRALLEVI (203 aa). Disordered regions lie at residues 1052–1073, 1168–1190, 1204–1274, and 1330–1372; these read PPVK…KNPR, PQLA…VNEG, QRTQ…SRKV, and PHAS…GVSS. Positions 1062-1071 are enriched in polar residues; it reads ENGTANSQKN. Over residues 1213 to 1274 the composition is skewed to polar residues; sequence KDQPIQASRS…NANRTASRKV (62 aa). The span at 1355-1365 shows a compositional bias: basic and acidic residues; that stretch reads REIEIDLESKN.

Belongs to the DNA polymerase type-A family. The cofactor is Mg(2+). In adult males, cleaved to produce a 100 kDa form. In terms of tissue distribution, expressed in ovaries (at protein level).

The protein resides in the nucleus. It catalyses the reaction DNA(n) + a 2'-deoxyribonucleoside 5'-triphosphate = DNA(n+1) + diphosphate. Resistant to aphidicolin, but sensitive to dideoxythymindine triphosphate (ddTTP) and N-ethyl malemide (NEM). Functionally, multifunctional protein with both DNA polymerase and ATPase activities. Might have 3' to 5' exonuclease activity. Plays a role in different DNA repair pathways such as DNA strand cross-link repair and microhomology-mediated end-joining (MMEJ), an alternative non-homologous end-joining (NHEJ) machinery triggered in response to double-strand breaks. MMEJ is an error-prone repair pathway that produces deletions of sequences from the strand being repaired and promotes genomic rearrangements, such as telomere fusions. Utilizes short microhomologies present in partially and fully single-stranded DNA (ssDNA) as primers for DNA synthesis. Prefers poly(dA)/oligo(dT) as a template-primer. The ATPase activity is necessary during interstrand cross-link (ICL) repair and has a critical role in generating templated insertions during MMEJ. Necessary for processing DNA damage induced by oxygen and N-ethylation. In follicle cells, contributes to double-strand break repair at physiological rereplication forks necessary for survival of fertilized eggs. The sequence is that of DNA polymerase theta from Drosophila melanogaster (Fruit fly).